A 708-amino-acid polypeptide reads, in one-letter code: MRERIWAPPLLLLLPLLLPPPLWGGPPDSPRRELELEPGPLQPFDLLYASGAAAYYSGDYERAVRDLEAALRSHRRLREIRTRCARHCAARHPLPPPPPGEGPGAELPLFRSLLGRARCYRSCETQRLGGPASRHRVSEDVRSDFQRRVPYNYLQRAYIKLNQLEKAVEAAHTFFVANPEHMEMQQNIENYRATAGVEALQLVDREAKPHMESYNAGVKHYEADDFEMAIRHFEQALREYFVEDTECRTLCEGPQRFEEYEYLGYKAGLYEAIADHYMQVLVCQHECVRELATRPGRLSPIENFLPLHYDYLQFAYYRVGEYVKALECAKAYLLCHPDDEDVLDNVDYYESLLDDSIDPASIEAREDLTMFVKRHKLESELIKSAAEGLGFSYTEPNYWIRYGGRQDENRVPSGVNVEGAEVHGFSMGKKLSPKIDRDLREGGPLLYENITFVYNSEQLNGTQRVLLDNVLSEEQCRELHSVASGIMLVGDGYRGKTSPHTPNEKFEGATVLKALKSGYEGRVPLKSARLFYDISEKARRIVESYFMLNSTLYFSYTHMVCRTALSGQQDRRNDLSHPIHADNCLLDPEANECWKEPPAYTFRDYSALLYMNDDFEGGEFIFTEMDAKTVTASIKPKCGRMISFSSGGENPHGVKAVTKGKRCAVALWFTLDPLYRELERIQADEVIAILDQEQQGKHELNINPKDEL.

A signal peptide spans 1 to 24; it reads MRERIWAPPLLLLLPLLLPPPLWG. TPR repeat units lie at residues 44-77, 148-181, 210-243, and 306-339; these read FDLLYASGAAAYYSGDYERAVRDLEAALRSHRRL, RVPYNYLQRAYIKLNQLEKAVEAAHTFFVANPEH, HMESYNAGVKHYEADDFEMAIRHFEQALREYFVE, and PLHYDYLQFAYYRVGEYVKALECAKAYLLCHPDD. N-linked (GlcNAc...) asparagine glycosylation is found at asparagine 449 and asparagine 549. A Fe2OG dioxygenase domain is found at 557-671; the sequence is THMVCRTALS…RCAVALWFTL (115 aa). 3 residues coordinate Fe cation: histidine 580, aspartate 582, and histidine 652. Residue arginine 662 is part of the active site. The Prevents secretion from ER signature appears at 705 to 708; sequence KDEL.

The protein belongs to the leprecan family. The cofactor is Fe cation. L-ascorbate serves as cofactor. In terms of tissue distribution, expression localized to the epithelia of bile ducts and to the sacroplasm of heart muscle and skeletal muscle. In the pancreas, localized to a subpopulation of Langerhans islet cells and in the salivary gland, expressed in acinar cells (at protein level). Expressed in adult heart, placenta, lung, liver, skeletal muscle and kidney. Detected in fetal heart, spleen, lung, liver skeletal muscle and kidney.

Its subcellular location is the endoplasmic reticulum. The protein localises to the sarcoplasmic reticulum. It localises to the golgi apparatus. The catalysed reaction is L-prolyl-[collagen] + 2-oxoglutarate + O2 = trans-3-hydroxy-L-prolyl-[collagen] + succinate + CO2. Inhibited by pyridine 2,4-dicarboxylate, an analog of 2-oxoglutarate. Prolyl 3-hydroxylase that catalyzes the post-translational formation of 3-hydroxyproline on collagens. Contributes to proline 3-hydroxylation of collagen COL4A1 and COL1A1 in tendons, the eye sclera and in the eye lens capsule. Has high activity with the type IV collagen COL4A1, and lower activity with COL1A1. Catalyzes hydroxylation of the first Pro in Gly-Pro-Hyp sequences where Hyp is 4-hydroxyproline. Has no activity on substrates that lack 4-hydroxyproline in the third position. This Homo sapiens (Human) protein is Prolyl 3-hydroxylase 2.